A 273-amino-acid chain; its full sequence is 4-hydroxy-3-methylbut-2-enyl diphosphate reductase (273 aa).

Cys-12 provides a ligand contact to [4Fe-4S] cluster. (2E)-4-hydroxy-3-methylbut-2-enyl diphosphate-binding residues include His-36 and His-70. Dimethylallyl diphosphate is bound by residues His-36 and His-70. Isopentenyl diphosphate contacts are provided by His-36 and His-70. Residue Cys-92 coordinates [4Fe-4S] cluster. Residue His-120 coordinates (2E)-4-hydroxy-3-methylbut-2-enyl diphosphate. His-120 contributes to the dimethylallyl diphosphate binding site. Residue His-120 participates in isopentenyl diphosphate binding. Residue Glu-122 is the Proton donor of the active site. Thr-157 contacts (2E)-4-hydroxy-3-methylbut-2-enyl diphosphate. Cys-185 is a binding site for [4Fe-4S] cluster. 4 residues coordinate (2E)-4-hydroxy-3-methylbut-2-enyl diphosphate: Ser-213, Ser-214, Asn-215, and Ser-257. 4 residues coordinate dimethylallyl diphosphate: Ser-213, Ser-214, Asn-215, and Ser-257. Positions 213, 214, 215, and 257 each coordinate isopentenyl diphosphate.

The protein belongs to the IspH family. The cofactor is [4Fe-4S] cluster.

The catalysed reaction is isopentenyl diphosphate + 2 oxidized [2Fe-2S]-[ferredoxin] + H2O = (2E)-4-hydroxy-3-methylbut-2-enyl diphosphate + 2 reduced [2Fe-2S]-[ferredoxin] + 2 H(+). It catalyses the reaction dimethylallyl diphosphate + 2 oxidized [2Fe-2S]-[ferredoxin] + H2O = (2E)-4-hydroxy-3-methylbut-2-enyl diphosphate + 2 reduced [2Fe-2S]-[ferredoxin] + 2 H(+). It participates in isoprenoid biosynthesis; dimethylallyl diphosphate biosynthesis; dimethylallyl diphosphate from (2E)-4-hydroxy-3-methylbutenyl diphosphate: step 1/1. Its pathway is isoprenoid biosynthesis; isopentenyl diphosphate biosynthesis via DXP pathway; isopentenyl diphosphate from 1-deoxy-D-xylulose 5-phosphate: step 6/6. Functionally, catalyzes the conversion of 1-hydroxy-2-methyl-2-(E)-butenyl 4-diphosphate (HMBPP) into a mixture of isopentenyl diphosphate (IPP) and dimethylallyl diphosphate (DMAPP). Acts in the terminal step of the DOXP/MEP pathway for isoprenoid precursor biosynthesis. The protein is 4-hydroxy-3-methylbut-2-enyl diphosphate reductase of Helicobacter hepaticus (strain ATCC 51449 / 3B1).